A 609-amino-acid polypeptide reads, in one-letter code: UvrABC system protein C (609 aa).

The 79-residue stretch at 16–94 folds into the GIY-YIG domain; sequence SSAGVYRMYD…IKQYMPKYNV (79 aa). In terms of domain architecture, UVR spans 203–238; it reads KQVISELVAKMEEAAEQQAYEQAARFRDQIMALRRV.

This sequence belongs to the UvrC family. As to quaternary structure, interacts with UvrB in an incision complex.

The protein localises to the cytoplasm. Its function is as follows. The UvrABC repair system catalyzes the recognition and processing of DNA lesions. UvrC both incises the 5' and 3' sides of the lesion. The N-terminal half is responsible for the 3' incision and the C-terminal half is responsible for the 5' incision. This chain is UvrABC system protein C, found in Shewanella oneidensis (strain ATCC 700550 / JCM 31522 / CIP 106686 / LMG 19005 / NCIMB 14063 / MR-1).